Here is a 378-residue protein sequence, read N- to C-terminus: Putative glutamate--cysteine ligase 2 (378 aa).

Belongs to the glutamate--cysteine ligase type 2 family. YbdK subfamily.

The catalysed reaction is L-cysteine + L-glutamate + ATP = gamma-L-glutamyl-L-cysteine + ADP + phosphate + H(+). ATP-dependent carboxylate-amine ligase which exhibits weak glutamate--cysteine ligase activity. The polypeptide is Putative glutamate--cysteine ligase 2 (Salinispora tropica (strain ATCC BAA-916 / DSM 44818 / JCM 13857 / NBRC 105044 / CNB-440)).